The following is a 436-amino-acid chain: GTPase Der (436 aa).

EngA-type G domains are found at residues 4 to 167 (PTVA…PVEE) and 175 to 351 (IRFS…ESQN). Residues 10 to 17 (GRPNVGKS), 57 to 61 (DTGGI), 119 to 122 (NKVD), 181 to 188 (GRPNVGKS), 229 to 233 (DTAGM), and 294 to 297 (NKWD) each bind GTP. In terms of domain architecture, KH-like spans 352–436 (KRIPSAVLND…PIHLIARKRK (85 aa)).

It belongs to the TRAFAC class TrmE-Era-EngA-EngB-Septin-like GTPase superfamily. EngA (Der) GTPase family. As to quaternary structure, associates with the 50S ribosomal subunit.

Functionally, GTPase that plays an essential role in the late steps of ribosome biogenesis. The chain is GTPase Der from Streptococcus uberis (strain ATCC BAA-854 / 0140J).